A 224-amino-acid chain; its full sequence is PKHD-type hydroxylase Shewmr7_0698 (224 aa).

The region spanning Gln-78 to Ser-176 is the Fe2OG dioxygenase domain. The Fe cation site is built by His-96, Asp-98, and His-157. 2-oxoglutarate is bound at residue Arg-167.

Fe(2+) serves as cofactor. Requires L-ascorbate as cofactor.

In Shewanella sp. (strain MR-7), this protein is PKHD-type hydroxylase Shewmr7_0698.